The chain runs to 290 residues: MQIKDLFSKKKYATIPSERPKRDIPEGLMNKCSKCGTIQYSKELDKNLKVCSSCGHHYRLSAWERIGMTLDDGRLYEYDADMESVDPLEFPGYKGKLEQQRQKNPNLREAVVTGEGTINGHPVVVAVMSFDFFSGSMGSVVGEKITRAIEAAHEKKLPLLIFSTSGGARMQESILSLMQMAKTSAALSMFQGAGGLFISVFTDPTMGGVSASFASLGDYNLAEPGALVGFAGRIVIEQTIRQKLPDNFQTAEFNMQHGQLDLVVHRKDMKTTLGKLLDMHTVREGLSHGG.

In terms of domain architecture, CoA carboxyltransferase N-terminal spans 28–290 (LMNKCSKCGT…TVREGLSHGG (263 aa)). Zn(2+)-binding residues include C32, C35, C51, and C54. The C4-type zinc-finger motif lies at 32–54 (CSKCGTIQYSKELDKNLKVCSSC).

It belongs to the AccD/PCCB family. In terms of assembly, acetyl-CoA carboxylase is a heterohexamer composed of biotin carboxyl carrier protein (AccB), biotin carboxylase (AccC) and two subunits each of ACCase subunit alpha (AccA) and ACCase subunit beta (AccD). Requires Zn(2+) as cofactor.

It localises to the cytoplasm. The enzyme catalyses N(6)-carboxybiotinyl-L-lysyl-[protein] + acetyl-CoA = N(6)-biotinyl-L-lysyl-[protein] + malonyl-CoA. The protein operates within lipid metabolism; malonyl-CoA biosynthesis; malonyl-CoA from acetyl-CoA: step 1/1. Functionally, component of the acetyl coenzyme A carboxylase (ACC) complex. Biotin carboxylase (BC) catalyzes the carboxylation of biotin on its carrier protein (BCCP) and then the CO(2) group is transferred by the transcarboxylase to acetyl-CoA to form malonyl-CoA. The chain is Acetyl-coenzyme A carboxylase carboxyl transferase subunit beta from Paenibacillus sp. (strain JDR-2).